Reading from the N-terminus, the 352-residue chain is tRNA (guanine-N(1)-)-methyltransferase (352 aa).

S-adenosyl-L-methionine contacts are provided by residues glycine 109 and 129-134; that span reads IGDYVL.

It belongs to the RNA methyltransferase TrmD family. As to quaternary structure, homodimer.

It is found in the cytoplasm. It catalyses the reaction guanosine(37) in tRNA + S-adenosyl-L-methionine = N(1)-methylguanosine(37) in tRNA + S-adenosyl-L-homocysteine + H(+). Specifically methylates guanosine-37 in various tRNAs. This is tRNA (guanine-N(1)-)-methyltransferase from Chlamydia trachomatis serovar L2 (strain ATCC VR-902B / DSM 19102 / 434/Bu).